A 657-amino-acid polypeptide reads, in one-letter code: MNMPVNKSPMINTCGGISSPYHEELWKLNFQHLSGERGHKSRPTFSITKEFILRFNQTQNSKEKEELLELARKIILRCKRKLGLKTLGSGRHVHLPAAWTEVIYLAQCKGEIQDESLNMLYASLDHASFDYDHLPALFFVAESVLYRLCCDASLKTYLYSVEIKLAKIGYLVFLRLFIFFLHGHLESFKQHLLRLQPYLYALSFSGASYHKYPNIFSNVQFILKASEIIGKRELRSESIFRPVEDKKRYENTDSDMGGYEINHLLWHCVAAWSCVQNNSPQLNNVLEHLVFHKTQLQKKCWLDSVLALLVLGEAAKLNMACLKALMDVVRDFVSSIMSVQNQEESCKVDDFSWAWNVVYIYTVILAEICLYAATSDLRKTALIGFCHCKSSQKNILYLDKSVPPELKETSILSLLEYFSSKMSENCDQVVWTGYYGLVYNLVKISWELQGDEEQDGLRNMIWQTLQKTKDYEEDVRIQNAINIAQAELNDPTDPFTRYSTNISSNVGEEVFSKYIGWRIANTLSKLFFPPIEAHFLPLKKPSIKKDQTKYPNKKLESVKKQVLHFTVREHPSVSEIPMFPYPDFFTKADKELAKIIDHHWQEELKIREKEDAICKAQELKDKKLAEKNHFQEVMKKREEKLHKQTKPYELPYRKEVI.

2 helical membrane-spanning segments follow: residues 168-188 (IGYL…LESF) and 353-373 (WAWN…LYAA).

Its subcellular location is the membrane. In terms of biological role, plays a critical role for male fertility and sperm motility by regulating sperm cytoplasm removal and maintaining axoneme integrity. This is Transmembrane protein 232 (TMEM232) from Homo sapiens (Human).